The sequence spans 69 residues: Amphipathic peptide StCT2 (69 aa).

An N-terminal signal peptide occupies residues 1–23 (MKTQFAVLIISMILMQMLVQTEA). Ile-37 is modified (isoleucine amide). A propeptide spanning residues 41–69 (SLRNQDQFDNMFDSDLSDADLKLLDDLFD) is cleaved from the precursor.

Belongs to the non-disulfide-bridged peptide (NDBP) superfamily. Short antimicrobial peptide (group 4) family. In terms of tissue distribution, expressed by the venom gland.

The protein resides in the secreted. It is found in the target cell membrane. Functionally, antimicrobial peptide that is rapidly bactericidal against Gram-positive bacteria. The sequence is that of Amphipathic peptide StCT2 from Scorpiops tibetanus (Scorpion).